We begin with the raw amino-acid sequence, 373 residues long: Chaperone protein DnaJ (373 aa).

The J domain maps to Asp5–Gly69. The CR-type zinc-finger motif lies at Gly130 to Thr212. The Zn(2+) site is built by Cys143, Cys146, Cys160, Cys163, Cys186, Cys189, Cys200, and Cys203. 4 CXXCXGXG motif repeats span residues Cys143–Gly150, Cys160–Gly167, Cys186–Gly193, and Cys200–Gly207.

It belongs to the DnaJ family. As to quaternary structure, homodimer. The cofactor is Zn(2+).

It localises to the cytoplasm. Participates actively in the response to hyperosmotic and heat shock by preventing the aggregation of stress-denatured proteins and by disaggregating proteins, also in an autonomous, DnaK-independent fashion. Unfolded proteins bind initially to DnaJ; upon interaction with the DnaJ-bound protein, DnaK hydrolyzes its bound ATP, resulting in the formation of a stable complex. GrpE releases ADP from DnaK; ATP binding to DnaK triggers the release of the substrate protein, thus completing the reaction cycle. Several rounds of ATP-dependent interactions between DnaJ, DnaK and GrpE are required for fully efficient folding. Also involved, together with DnaK and GrpE, in the DNA replication of plasmids through activation of initiation proteins. This is Chaperone protein DnaJ from Staphylococcus epidermidis (strain ATCC 35984 / DSM 28319 / BCRC 17069 / CCUG 31568 / BM 3577 / RP62A).